The chain runs to 890 residues: MSASSSRLLFDCGSLDWPNKSLFGDPTTRDVMNEHISSTWNAVIRRHMLAPNANAETILGRDGLPSAQFDAYGAMLPSFIQALNAPTTRLRISAPLSTAESILCADASHAPWLYMANSVCAYEATHLQPVQTFIAFNFAHGYCYLSLFIPLSFRITFENARGFSRFLEQLPDILGAYPTLAAIYKTMLFAIRLFPEVLQAPIPIIAKRPGVLQFHVSDARGLPPSWFPMKCGSVASFVALITNNLNSDLLNGIVGSNGDGEHYTNWNSGHDHWIVNRFITVKDLHSSLKSALEVDLDTEGGRNAVLDLLLDLGVTNLVRREKRFPAYFQGAESVYLLLSCERVGNELVAVQDALQEPLANYSGLDLRALIINLGGLPSRHSDICYTRNIFENDNHLVWNFEFYRIASITKNAQIDRDVLSSSMANLFSDFVSESSNGQYRVKEPRPVVQYRVEHDEPVASSAPSAWWQVLIGITTAILGAIIFFLWRCFLRAKRVKFQAKDSFPWFTTSGDDDSPPPPGDSPSRPPGRSPDRVLPRTVVRDLSFNDDDDLHSVDLNEAGSRFGEVVSLIARGNLRELAGAIPESLSNLTLLQTSASGSGFYTMVALYLATLGDAITAFHEHNDASPATIQSLRTLELQLEARGLRFNEAGTPANLIQRGVNSSVGRALVRLTQSALLATGENFRTRMATTLERIAAERLNTLTAYDQRVIEMTTELLAAIKPVLEVERSELTPHLANAEALLQVYNNLFSTDYVSASLLALRREMILRSAEGRVGEQPTSASDAANEELVQRSMTKLDKEIELFQAQIDSQRRAVTITEASNLRENILQPINTVANIAMAGAFLRGGARHRMPGMPDVATPMPNPFRAFSGRGHSLTTTRSGGLFRRPRV.

In terms of domain architecture, Peptidase C6 spans 135 to 255; sequence AFNFAHGYCY…NSDLLNGIVG (121 aa). Catalysis depends on for helper component proteinase activity residues Cys143 and His215. Residues 506–533 are disordered; the sequence is FTTSGDDDSPPPPGDSPSRPPGRSPDRV. Residues 515 to 528 show a composition bias toward pro residues; the sequence is PPPPGDSPSRPPGR. A coiled-coil region spans residues 788–816; it reads ELVQRSMTKLDKEIELFQAQIDSQRRAVT.

It belongs to the bymoviruses polyprotein 2 family. In terms of processing, the viral RNA2 of bymoviruses is expressed as a single polyprotein which undergoes post-translational proteolytic processing resulting in the production of at least two individual proteins. The HC-pro cleaves its C-terminus autocatalytically (Potential).

The enzyme catalyses Hydrolyzes a Gly-|-Gly bond at its own C-terminus, commonly in the sequence -Tyr-Xaa-Val-Gly-|-Gly, in the processing of the potyviral polyprotein.. In Hordeum vulgare (Barley), this protein is Genome polyprotein 2.